The following is a 139-amino-acid chain: Natriuretic peptide Mc-NP (139 aa).

Residues 1 to 25 (MVGLSRLRGGGLLLVLALLPLALDG) form the signal peptide. Residues 26–75 (KPLEEAPTAPSRIIPFSRPVRKQSQAVLDPMVHPERPAGSGDDGDSRRLE) constitute a propeptide that is removed on maturation. The tract at residues 45-72 (VRKQSQAVLDPMVHPERPAGSGDDGDSR) is disordered. A disulfide bond links C86 and C102. Positions 117–139 (IIPFSRPVRKESRAALDRMQQPG) are excised as a propeptide.

Belongs to the natriuretic peptide family. As to expression, expressed by the venom gland.

The protein resides in the secreted. Snake venom natriuretic peptide that dose-dependently induces the rapid relaxation of rat aortic strips phenylephrine-precontracted. Acts by stimulating cGMP production in a dose-dependent manner (by probably activating NPR1 and/or NPR2). May also show potent hypotensive effects. A synthetic peptide (AA 77-108, where the Cys-95 is replaced by a Ser) increases sodium excretion and urinary volume in rat kidneys. This is Natriuretic peptide Mc-NP from Micrurus corallinus (Brazilian coral snake).